The following is a 517-amino-acid chain: GMP synthase [glutamine-hydrolyzing] (517 aa).

One can recognise a Glutamine amidotransferase type-1 domain in the interval 11–202 (KIIVLDFGSQ…AFNVCDAKAN (192 aa)). The active-site Nucleophile is the C88. Active-site residues include H176 and E178. Residues 203 to 392 (WTMDDFIEMQ…LGIPHDLVWR (190 aa)) form the GMPS ATP-PPase domain. Residue 230–236 (SGGVDSS) participates in ATP binding.

Homodimer.

It carries out the reaction XMP + L-glutamine + ATP + H2O = GMP + L-glutamate + AMP + diphosphate + 2 H(+). The protein operates within purine metabolism; GMP biosynthesis; GMP from XMP (L-Gln route): step 1/1. Functionally, catalyzes the synthesis of GMP from XMP. The chain is GMP synthase [glutamine-hydrolyzing] from Lactobacillus gasseri (strain ATCC 33323 / DSM 20243 / BCRC 14619 / CIP 102991 / JCM 1131 / KCTC 3163 / NCIMB 11718 / NCTC 13722 / AM63).